The chain runs to 547 residues: DNA mismatch repair protein MutL (547 aa).

The protein belongs to the DNA mismatch repair MutL/HexB family.

Its function is as follows. This protein is involved in the repair of mismatches in DNA. It is required for dam-dependent methyl-directed DNA mismatch repair. May act as a 'molecular matchmaker', a protein that promotes the formation of a stable complex between two or more DNA-binding proteins in an ATP-dependent manner without itself being part of a final effector complex. This chain is DNA mismatch repair protein MutL, found in Deinococcus radiodurans (strain ATCC 13939 / DSM 20539 / JCM 16871 / CCUG 27074 / LMG 4051 / NBRC 15346 / NCIMB 9279 / VKM B-1422 / R1).